The primary structure comprises 119 residues: Ribosome-binding factor A (119 aa).

The protein belongs to the RbfA family. Monomer. Binds 30S ribosomal subunits, but not 50S ribosomal subunits or 70S ribosomes.

It is found in the cytoplasm. In terms of biological role, one of several proteins that assist in the late maturation steps of the functional core of the 30S ribosomal subunit. Associates with free 30S ribosomal subunits (but not with 30S subunits that are part of 70S ribosomes or polysomes). Required for efficient processing of 16S rRNA. May interact with the 5'-terminal helix region of 16S rRNA. The sequence is that of Ribosome-binding factor A from Mycoplasmoides gallisepticum (strain R(low / passage 15 / clone 2)) (Mycoplasma gallisepticum).